A 181-amino-acid chain; its full sequence is Transmembrane protein 47 (181 aa).

Ala-2 bears the N-acetylalanine mark. Transmembrane regions (helical) follow at residues 21–41 (LVGL…VLSP), 83–103 (ALLL…LISI), 115–135 (VAVM…LYPI), and 152–172 (GYGL…LYCL).

Belongs to the TMEM47 family. In terms of assembly, interacts with CTNNB1, CTNNA1, PRKCI, PARD6B. Interacts with FYB1. In terms of tissue distribution, expressed in podocytes (at protein level).

The protein localises to the membrane. It is found in the cell junction. The protein resides in the adherens junction. In terms of biological role, regulates cell junction organization in epithelial cells. May play a role in the transition from adherens junction to tight junction assembly. May regulate F-actin polymerization required for tight junctional localization dynamics and affect the junctional localization of PARD6B. During podocyte differentiation may negatively regulate activity of FYN and subsequently the abundance of nephrin. This Mus musculus (Mouse) protein is Transmembrane protein 47 (Tmem47).